A 231-amino-acid chain; its full sequence is DNA mismatch repair protein MutH (231 aa).

Belongs to the MutH family.

The protein localises to the cytoplasm. Its function is as follows. Sequence-specific endonuclease that cleaves unmethylated GATC sequences. It is involved in DNA mismatch repair. In Salmonella paratyphi A (strain ATCC 9150 / SARB42), this protein is DNA mismatch repair protein MutH.